Here is a 543-residue protein sequence, read N- to C-terminus: Phosphatidylinositol/phosphatidylcholine transfer protein SFH12 (543 aa).

Residues 120 to 294 (EIDEVLKYYP…FLGGSCTCAD (175 aa)) enclose the CRAL-TRIO domain. The interval 316–356 (HNGDHKCSKGSQAENSGEKTIPEEDDSTTEPASEEEKASKE) is disordered. Positions 490-526 (DKEEMLNAAISRSNVLEQELAATKKALDDSLGRQEEL) form a coiled coil.

Belongs to the SFH family. As to expression, specifically expressed in flowers.

Its subcellular location is the golgi apparatus membrane. The protein resides in the cell membrane. Functionally, required for transport of secretory proteins from the Golgi complex. Catalyzes the transfer of phosphatidylinositol and phosphatidylcholine between membranes in vitro. The chain is Phosphatidylinositol/phosphatidylcholine transfer protein SFH12 (SFH12) from Arabidopsis thaliana (Mouse-ear cress).